The primary structure comprises 408 residues: MPKVGIAAQAGRTRVRRAWLTALMMTAVMIGAVACGSGRGPAPIKVIADKGTPFADLLVPKLTASVTDGAVGVTVDAPVSVTAADGVLAAVTMVNDNGRPVAGRLSPDGLRWSTTEQLGYNRRYTLNATALGLGGAATRQLTFQTSSPAHLTMPYVMPGDGEVVGVGEPVAIRFDENIADRGAAEKAIKITTNPPVEGAFYWLNNREVRWRPEHFWKPGTAVDVAVNTYGVDLGEGMFGEDNVQTHFTIGDEVIATADDNTKILTVRVNGEVVKSMPTSMGKDSTPTANGIYIVGSRYKHIIMDSSTYGVPVNSPNGYRTDVDWATQISYSGVFVHSAPWSVGAQGHTNTSHGCLNVSPSNAQWFYDHVKRGDIVEVVNTVGGTLPGIDGLGDWNIPWDQWRAGNAKA.

A signal peptide spans 1–34; sequence MPKVGIAAQAGRTRVRRAWLTALMMTAVMIGAVA. Residue Cys35 is the site of N-palmitoyl cysteine attachment. Cys35 carries the S-diacylglycerol cysteine lipid modification. The Ca(2+) site is built by Asp232, Glu235, and Gly236. The L,D-TPase catalytic domain occupies 253–378; the sequence is VIATADDNTK…VKRGDIVEVV (126 aa). Substrate is bound by residues Tyr318 and 331–332; that span reads SG. His336 acts as the Proton donor/acceptor in catalysis. The Nucleophile role is filled by Cys354. Residue Asn356 coordinates substrate.

Monomer.

Its subcellular location is the cell membrane. It participates in cell wall biogenesis; peptidoglycan biosynthesis. Its activity is regulated as follows. Is irreversibly inactivated by the beta-lactams carbapenems via the formation of a covalent adduct resulting from acylation of the catalytic Cys. Generates 3-&gt;3 cross-links in peptidoglycan, catalyzing the cleavage of the mDap(3)-D-Ala(4) bond of a tetrapeptide donor stem and the formation of a bond between the carbonyl of mDap(3) of the donor stem and the side chain of mDap(3) of the acceptor stem. Is specific for donor substrates containing a stem tetrapeptide since it cannot use pentapeptide stems. Is essential for virulence in a mouse model of acute infection. The chain is L,D-transpeptidase 2 (ldtB) from Mycobacterium tuberculosis (strain CDC 1551 / Oshkosh).